A 147-amino-acid chain; its full sequence is D-aminoacyl-tRNA deacylase (147 aa).

The Gly-cisPro motif, important for rejection of L-amino acids motif lies at 136 to 137 (GP).

The protein belongs to the DTD family. Homodimer.

It localises to the cytoplasm. It carries out the reaction glycyl-tRNA(Ala) + H2O = tRNA(Ala) + glycine + H(+). The enzyme catalyses a D-aminoacyl-tRNA + H2O = a tRNA + a D-alpha-amino acid + H(+). An aminoacyl-tRNA editing enzyme that deacylates mischarged D-aminoacyl-tRNAs. Also deacylates mischarged glycyl-tRNA(Ala), protecting cells against glycine mischarging by AlaRS. Acts via tRNA-based rather than protein-based catalysis; rejects L-amino acids rather than detecting D-amino acids in the active site. By recycling D-aminoacyl-tRNA to D-amino acids and free tRNA molecules, this enzyme counteracts the toxicity associated with the formation of D-aminoacyl-tRNA entities in vivo and helps enforce protein L-homochirality. The protein is D-aminoacyl-tRNA deacylase of Streptococcus pneumoniae serotype 2 (strain D39 / NCTC 7466).